Here is a 93-residue protein sequence, read N- to C-terminus: Large ribosomal subunit protein bL27 (93 aa).

Residues 1–8 (MIMDLQFF) constitute a propeptide that is removed on maturation. The segment at 8-29 (FSHHKGGGSTANGRNSAGRRLG) is disordered.

This sequence belongs to the bacterial ribosomal protein bL27 family. In terms of processing, the N-terminus is cleaved by ribosomal processing cysteine protease Prp.

The chain is Large ribosomal subunit protein bL27 from Limosilactobacillus reuteri (strain DSM 20016) (Lactobacillus reuteri).